A 700-amino-acid polypeptide reads, in one-letter code: ABC transporter B family member 26, chloroplastic (700 aa).

The transit peptide at 1-59 directs the protein to the chloroplast; that stretch reads MAQQVLGCTSRPIRVSLHRCSVITTSDTIRRKNLRFVRNPRLSFSLQSSTRNYRLPSIN. Transmembrane regions (helical) follow at residues 137 to 157, 182 to 202, and 268 to 288; these read WVIFAAFSTLIVAALSEITIP, LVTLCVTSGICSGIRGCFFGI, and LIYLLILSWPLGLCTLVICCI. The ABC transmembrane type-1 domain occupies 139–421; the sequence is IFAAFSTLIV…VGDNLSSLMQ (283 aa). Residues 455–694 form the ABC transporter domain; it reads IEFVDVSFSY…DGLYARLTKR (240 aa). 490–497 serves as a coordination point for ATP; it reads GLSGSGKS.

This sequence belongs to the ABC transporter superfamily. ABCB family. Multidrug resistance exporter (TC 3.A.1.201) subfamily.

Its subcellular location is the plastid. It is found in the chloroplast membrane. This chain is ABC transporter B family member 26, chloroplastic (ABCB26), found in Arabidopsis thaliana (Mouse-ear cress).